A 74-amino-acid chain; its full sequence is Exodeoxyribonuclease 7 small subunit (74 aa).

It belongs to the XseB family. As to quaternary structure, heterooligomer composed of large and small subunits.

Its subcellular location is the cytoplasm. It carries out the reaction Exonucleolytic cleavage in either 5'- to 3'- or 3'- to 5'-direction to yield nucleoside 5'-phosphates.. Its function is as follows. Bidirectionally degrades single-stranded DNA into large acid-insoluble oligonucleotides, which are then degraded further into small acid-soluble oligonucleotides. The protein is Exodeoxyribonuclease 7 small subunit of Neisseria meningitidis serogroup C / serotype 2a (strain ATCC 700532 / DSM 15464 / FAM18).